A 360-amino-acid chain; its full sequence is DNA replication and repair protein RecF (360 aa).

Residue 30 to 37 participates in ATP binding; the sequence is GQNGSGKT.

This sequence belongs to the RecF family.

The protein resides in the cytoplasm. Its function is as follows. The RecF protein is involved in DNA metabolism; it is required for DNA replication and normal SOS inducibility. RecF binds preferentially to single-stranded, linear DNA. It also seems to bind ATP. In Shewanella baltica (strain OS155 / ATCC BAA-1091), this protein is DNA replication and repair protein RecF.